Reading from the N-terminus, the 950-residue chain is Leucine--tRNA ligase (950 aa).

Residues 72–83 (PYPSGEGLHVGH) carry the 'HIGH' region motif. The 'KMSKS' region signature appears at 722 to 726 (KIGKS). Lys-725 provides a ligand contact to ATP.

Belongs to the class-I aminoacyl-tRNA synthetase family.

It is found in the cytoplasm. It catalyses the reaction tRNA(Leu) + L-leucine + ATP = L-leucyl-tRNA(Leu) + AMP + diphosphate. This Mycobacterium sp. (strain JLS) protein is Leucine--tRNA ligase.